The chain runs to 129 residues: Small ribosomal subunit protein uS11 (129 aa).

It belongs to the universal ribosomal protein uS11 family. In terms of assembly, part of the 30S ribosomal subunit. Interacts with proteins S7 and S18. Binds to IF-3.

Its function is as follows. Located on the platform of the 30S subunit, it bridges several disparate RNA helices of the 16S rRNA. Forms part of the Shine-Dalgarno cleft in the 70S ribosome. The protein is Small ribosomal subunit protein uS11 of Staphylococcus saprophyticus subsp. saprophyticus (strain ATCC 15305 / DSM 20229 / NCIMB 8711 / NCTC 7292 / S-41).